Here is a 468-residue protein sequence, read N- to C-terminus: 55 kDa erythrocyte membrane protein (468 aa).

Positions 73 to 154 constitute a PDZ domain; the sequence is LVQFEKVTEE…MVSIKVIPNQ (82 aa). The region spanning 160–230 is the SH3 domain; the sequence is ALQMFMRAQF…PSPELQEWRV (71 aa). Positions 284–453 constitute a Guanylate kinase-like domain; sequence RKTLVLIGAS…SLKLLEEAFE (170 aa).

The protein belongs to the MAGUK family.

It is found in the membrane. It localises to the cell projection. Its subcellular location is the stereocilium. May play a role in the regulation of neutrophil polarization. The sequence is that of 55 kDa erythrocyte membrane protein (MPP1) from Gallus gallus (Chicken).